Here is a 490-residue protein sequence, read N- to C-terminus: Stomatal closure-related actin-binding protein 3 (490 aa).

This sequence belongs to the SCAB family. In terms of tissue distribution, expressed in roots, stems, leaves, siliques and flowers.

The protein resides in the cytoplasm. Its subcellular location is the cytoskeleton. Probable plant-specific actin binding protein that bundles and stabilizes microfilaments (MFs). The polypeptide is Stomatal closure-related actin-binding protein 3 (Arabidopsis thaliana (Mouse-ear cress)).